The following is a 338-amino-acid chain: tRNA N6-adenosine threonylcarbamoyltransferase (338 aa).

Residues His111 and His115 each coordinate Fe cation. Substrate-binding positions include 134–138 (LVSGG), Asp167, Gly180, and Asn272. Residue Asp300 participates in Fe cation binding.

This sequence belongs to the KAE1 / TsaD family. Requires Fe(2+) as cofactor.

It localises to the cytoplasm. It carries out the reaction L-threonylcarbamoyladenylate + adenosine(37) in tRNA = N(6)-L-threonylcarbamoyladenosine(37) in tRNA + AMP + H(+). In terms of biological role, required for the formation of a threonylcarbamoyl group on adenosine at position 37 (t(6)A37) in tRNAs that read codons beginning with adenine. Is involved in the transfer of the threonylcarbamoyl moiety of threonylcarbamoyl-AMP (TC-AMP) to the N6 group of A37, together with TsaE and TsaB. TsaD likely plays a direct catalytic role in this reaction. The chain is tRNA N6-adenosine threonylcarbamoyltransferase from Shewanella denitrificans (strain OS217 / ATCC BAA-1090 / DSM 15013).